Reading from the N-terminus, the 788-residue chain is Protein translocase subunit SecA 2 (788 aa).

Residues glutamine 77, 95-99 (GEGKT), and aspartate 491 contribute to the ATP site.

This sequence belongs to the SecA family. As to quaternary structure, monomer and homodimer. Part of the essential Sec protein translocation apparatus which comprises SecA, SecYEG and auxiliary proteins SecDF. Other proteins may also be involved.

It is found in the cell membrane. It localises to the cytoplasm. It carries out the reaction ATP + H2O + cellular proteinSide 1 = ADP + phosphate + cellular proteinSide 2.. Functionally, part of the Sec protein translocase complex. Interacts with the SecYEG preprotein conducting channel. Has a central role in coupling the hydrolysis of ATP to the transfer of proteins into and across the cell membrane, serving as an ATP-driven molecular motor driving the stepwise translocation of polypeptide chains across the membrane. In Lactobacillus johnsonii (strain CNCM I-12250 / La1 / NCC 533), this protein is Protein translocase subunit SecA 2.